Here is a 1356-residue protein sequence, read N- to C-terminus: Serine/threonine-protein kinase PSK1 (1356 aa).

Serine 10 is subject to Phosphoserine. Positions 20-115 (KHAITHKGTS…SVDSTVSSPL (96 aa)) are disordered. 2 stretches are compositionally biased toward polar residues: residues 26 to 37 (KGTSSSVASLQT) and 54 to 64 (YDTSLSDVSTP). A compositionally biased stretch (low complexity) spans 99–115 (LPSTASSSVDSTVSSPL). A phosphoserine mark is found at serine 192, serine 202, serine 255, serine 286, and serine 327. The 69-residue stretch at 450–518 (RTFTSTKNSA…VLHKLLSTEG (69 aa)) folds into the PAS 1 domain. Residues 592–608 (PTLSSSSTLSLPKMASS) are compositionally biased toward low complexity. 2 disordered regions span residues 592–612 (PTLSSSSTLSLPKMASSPTGS) and 627–660 (YTKPTSTENRNGDENQLDGDSHSEPSLSSSPVRS). Positions 738–807 (LKLKIHSLPY…FINDKYPALD (70 aa)) constitute a PAS 2 domain. At serine 926 the chain carries Phosphoserine. The interval 948–972 (DSRAHSQSTLSEQEQVPLENDKDSG) is disordered. Residues 952-961 (HSQSTLSEQE) show a composition bias toward polar residues. Phosphoserine is present on residues serine 1018, serine 1023, serine 1035, and serine 1055. Residues 1021–1032 (TESLADSKSSGK) are compositionally biased toward polar residues. The interval 1021 to 1066 (TESLADSKSSGKGLSPLEEEKLIDENATENGLAGSPKDEDGIIMTN) is disordered. At threonine 1079 the chain carries Phosphothreonine. Residues 1096–1354 (FVSLQKMGEG…IDDINNDKWL (259 aa)) form the Protein kinase domain. ATP-binding positions include 1102 to 1110 (MGEGAYGKV) and lysine 1125. Aspartate 1230 functions as the Proton acceptor in the catalytic mechanism.

It belongs to the protein kinase superfamily. Ser/Thr protein kinase family.

Its subcellular location is the cytoplasm. The enzyme catalyses L-seryl-[protein] + ATP = O-phospho-L-seryl-[protein] + ADP + H(+). It catalyses the reaction L-threonyl-[protein] + ATP = O-phospho-L-threonyl-[protein] + ADP + H(+). Functionally, serine/threonine-protein kinase involved in the control of sugar metabolism and translation. Phosphorylates UGP1, which is required for normal glycogen and beta-(1,6)-glucan synthesis. This phosphorylation shifts glucose partitioning toward cell wall glucan synthesis at the expense of glycogen synthesis. The polypeptide is Serine/threonine-protein kinase PSK1 (PSK1) (Saccharomyces cerevisiae (strain ATCC 204508 / S288c) (Baker's yeast)).